The following is a 312-amino-acid chain: Deoxyribonuclease-1-like 1 (312 aa).

A signal peptide spans 1-35 (MPSGQPVFPRRVPDAYIAMRGLVVASLLILLVGGT). Asn-102 carries an N-linked (GlcNAc...) asparagine glycan. The active site involves Glu-113. N-linked (GlcNAc...) asparagine glycosylation is present at Asn-133. His-164 is a catalytic residue. Cysteines 203 and 240 form a disulfide. The N-linked (GlcNAc...) asparagine glycan is linked to Asn-239.

Belongs to the DNase I family.

The protein resides in the endoplasmic reticulum. The sequence is that of Deoxyribonuclease-1-like 1 (Dnase1l1) from Rattus norvegicus (Rat).